Consider the following 463-residue polypeptide: Glucagon-like peptide 1 receptor (463 aa).

Positions 1-21 (MAVTPSLLRLALLLLGAVGRA) are cleaved as a signal peptide. At 22–139 (GPRPQGATVS…KQGERNSPEE (118 aa)) the chain is on the extracellular side. Cystine bridges form between cysteine 46/cysteine 71, cysteine 62/cysteine 104, and cysteine 85/cysteine 126. N-linked (GlcNAc...) asparagine glycans are attached at residues asparagine 63, asparagine 82, and asparagine 115. A helical membrane pass occupies residues 140-164 (QLLSLYIIYTVGYALSFSALVIASA). Residues 165–175 (ILVSFRHLHCT) are Cytoplasmic-facing. A helical transmembrane segment spans residues 176-201 (RNYIHLNLFASFILRALSVFIKDAAL). At 202 to 227 (KWMYSTAAQQHQWDGLLSYQDSLGCR) the chain is on the extracellular side. A disulfide bridge connects residues cysteine 226 and cysteine 296. The helical transmembrane segment at 228–251 (LVFLLMQYCVAANYYWLLVEGVYL) threads the bilayer. At 252-265 (YTLLAFSVFSEQRI) the chain is on the cytoplasmic side. The helical transmembrane segment at 266 to 290 (FKLYLSIGWGVPLLFVIPWGIVKYL) threads the bilayer. The Extracellular portion of the chain corresponds to 291–305 (YEDEGCWTRNSNMNY). A helical membrane pass occupies residues 306 to 328 (WLIIRLPILFAIGVNFLVFIRVI). Over 329 to 348 (CIVIAKLKANLMCKTDIKCR) the chain is Cytoplasmic. Cysteine 341 is subject to ADP-ribosylcysteine. Arginine 348 is modified (ADP-ribosylarginine). A helical membrane pass occupies residues 349 to 370 (LAKSTLTLIPLLGTHEVIFAFV). An important for allosteric inhibitor binding region spans residues 352 to 355 (STLT). Over 371 to 383 (MDEHARGTLRFVK) the chain is Extracellular. Residues 384 to 404 (LFTELSFTSFQGFMVAVLYCF) traverse the membrane as a helical segment. At 405 to 463 (VNNEVQMEFRKSWERWRLERLNIQRDSSMKPLKCPTSSVSSGATVGSSVYAATCQNSCS) the chain is on the cytoplasmic side.

This sequence belongs to the G-protein coupled receptor 2 family. May form homodimers and heterodimers with GIPR. N-glycosylation enhances cell surface expression and lengthens receptor half-life by preventing degradation in the ER. Pancreatic islets, stomach, lung, rat insulinoma cell line.

The protein localises to the cell membrane. G-protein coupled receptor for glucagon-like peptide 1 (GLP-1). Ligand binding triggers activation of a signaling cascade that leads to the activation of adenylyl cyclase and increased intracellular cAMP levels. Plays a role in regulating insulin secretion in response to GLP-1. The chain is Glucagon-like peptide 1 receptor (Glp1r) from Rattus norvegicus (Rat).